Here is a 293-residue protein sequence, read N- to C-terminus: tRNA (guanine-N(7)-)-methyltransferase (293 aa).

S-adenosyl-L-methionine-binding positions include Gly105, 128–129 (EI), 163–164 (NT), and Cys183. Residue Asp186 is part of the active site. 261-263 (TEE) lines the S-adenosyl-L-methionine pocket.

This sequence belongs to the class I-like SAM-binding methyltransferase superfamily. TrmB family. As to quaternary structure, forms a complex with trm82.

It localises to the nucleus. The enzyme catalyses guanosine(46) in tRNA + S-adenosyl-L-methionine = N(7)-methylguanosine(46) in tRNA + S-adenosyl-L-homocysteine. The protein operates within tRNA modification; N(7)-methylguanine-tRNA biosynthesis. Its function is as follows. Catalyzes the formation of N(7)-methylguanine at position 46 (m7G46) in tRNA. This chain is tRNA (guanine-N(7)-)-methyltransferase (trm8), found in Neurospora crassa (strain ATCC 24698 / 74-OR23-1A / CBS 708.71 / DSM 1257 / FGSC 987).